The primary structure comprises 359 residues: 3-dehydroquinate synthase (359 aa).

NAD(+) is bound by residues 70-75, 105-109, 129-130, lysine 142, lysine 151, and 169-172; these read DGEQYK, GVIGD, TT, and FYKT. Zn(2+) is bound by residues glutamate 184, histidine 247, and histidine 264.

This sequence belongs to the sugar phosphate cyclases superfamily. Dehydroquinate synthase family. Requires Co(2+) as cofactor. Zn(2+) is required as a cofactor. It depends on NAD(+) as a cofactor.

Its subcellular location is the cytoplasm. The enzyme catalyses 7-phospho-2-dehydro-3-deoxy-D-arabino-heptonate = 3-dehydroquinate + phosphate. The protein operates within metabolic intermediate biosynthesis; chorismate biosynthesis; chorismate from D-erythrose 4-phosphate and phosphoenolpyruvate: step 2/7. In terms of biological role, catalyzes the conversion of 3-deoxy-D-arabino-heptulosonate 7-phosphate (DAHP) to dehydroquinate (DHQ). This is 3-dehydroquinate synthase from Francisella tularensis subsp. holarctica (strain FTNF002-00 / FTA).